A 194-amino-acid polypeptide reads, in one-letter code: Potassium-transporting ATPase KdpC subunit (194 aa).

A helical membrane pass occupies residues 12-34; sequence LFLLLLTGGVYPLLTTALGQWWF.

The protein belongs to the KdpC family. In terms of assembly, the system is composed of three essential subunits: KdpA, KdpB and KdpC.

It localises to the cell inner membrane. Part of the high-affinity ATP-driven potassium transport (or Kdp) system, which catalyzes the hydrolysis of ATP coupled with the electrogenic transport of potassium into the cytoplasm. This subunit acts as a catalytic chaperone that increases the ATP-binding affinity of the ATP-hydrolyzing subunit KdpB by the formation of a transient KdpB/KdpC/ATP ternary complex. The protein is Potassium-transporting ATPase KdpC subunit of Salmonella enteritidis PT4 (strain P125109).